The chain runs to 342 residues: Isopentenyl-diphosphate delta-isomerase (342 aa).

Position 11 to 12 (11 to 12 (RK)) interacts with substrate. Residues Ser-68, 69-71 (SMT), Ser-99, and Asn-127 contribute to the FMN site. 99–101 (SMR) lines the substrate pocket. Substrate is bound at residue Gln-162. Glu-163 provides a ligand contact to Mg(2+). FMN contacts are provided by residues Lys-194, Thr-224, 274 to 276 (GLK), and 295 to 296 (AG).

Belongs to the IPP isomerase type 2 family. As to quaternary structure, homooctamer. Dimer of tetramers. The cofactor is FMN. NADPH is required as a cofactor. Mg(2+) serves as cofactor.

It is found in the cytoplasm. The enzyme catalyses isopentenyl diphosphate = dimethylallyl diphosphate. Its function is as follows. Involved in the biosynthesis of isoprenoids. Catalyzes the 1,3-allylic rearrangement of the homoallylic substrate isopentenyl (IPP) to its allylic isomer, dimethylallyl diphosphate (DMAPP). This chain is Isopentenyl-diphosphate delta-isomerase, found in Rickettsia canadensis (strain McKiel).